The following is a 296-amino-acid chain: Elongation factor Ts (296 aa).

Residues 79 to 82 (TDFV) are involved in Mg(2+) ion dislocation from EF-Tu.

This sequence belongs to the EF-Ts family.

The protein localises to the cytoplasm. Associates with the EF-Tu.GDP complex and induces the exchange of GDP to GTP. It remains bound to the aminoacyl-tRNA.EF-Tu.GTP complex up to the GTP hydrolysis stage on the ribosome. The polypeptide is Elongation factor Ts (Acholeplasma laidlawii (strain PG-8A)).